We begin with the raw amino-acid sequence, 390 residues long: Bibenzyl synthase (390 aa).

Cysteine 164 is a catalytic residue.

Belongs to the thiolase-like superfamily. Chalcone/stilbene synthases family.

The enzyme catalyses 3-(3-hydroxyphenyl)-propanoyl-CoA + 3 malonyl-CoA + 3 H(+) = 3,3',5-trihydroxybibenzyl + 4 CO2 + 4 CoA. The protein is Bibenzyl synthase (BIBSY212) of Phalaenopsis sp. (Moth orchid).